Consider the following 464-residue polypeptide: Argininosuccinate lyase (464 aa).

This sequence belongs to the lyase 1 family. Argininosuccinate lyase subfamily.

It is found in the cytoplasm. The catalysed reaction is 2-(N(omega)-L-arginino)succinate = fumarate + L-arginine. It participates in amino-acid biosynthesis; L-arginine biosynthesis; L-arginine from L-ornithine and carbamoyl phosphate: step 3/3. The chain is Argininosuccinate lyase from Pseudomonas syringae pv. tomato (strain ATCC BAA-871 / DC3000).